We begin with the raw amino-acid sequence, 459 residues long: Bifunctional protein GlmU (459 aa).

Positions 1–230 (MSNRFAVILA…FDETLGVNDR (230 aa)) are pyrophosphorylase. UDP-N-acetyl-alpha-D-glucosamine is bound by residues 9–12 (LAAG), Lys23, Gln73, and 78–79 (GT). Asp103 serves as a coordination point for Mg(2+). Positions 140, 155, 170, and 228 each coordinate UDP-N-acetyl-alpha-D-glucosamine. Asn228 contributes to the Mg(2+) binding site. The linker stretch occupies residues 231–251 (VALSQAEIIMKNRINRKNMVN). The tract at residues 252–459 (GVTIIDPSNT…VDQLLNKKKS (208 aa)) is N-acetyltransferase. Residues Arg333 and Lys351 each contribute to the UDP-N-acetyl-alpha-D-glucosamine site. His363 functions as the Proton acceptor in the catalytic mechanism. Tyr366 and Asn377 together coordinate UDP-N-acetyl-alpha-D-glucosamine. Acetyl-CoA contacts are provided by residues 386–387 (NY), Ala423, and Arg440.

It in the N-terminal section; belongs to the N-acetylglucosamine-1-phosphate uridyltransferase family. In the C-terminal section; belongs to the transferase hexapeptide repeat family. In terms of assembly, homotrimer. Requires Mg(2+) as cofactor.

The protein localises to the cytoplasm. The catalysed reaction is alpha-D-glucosamine 1-phosphate + acetyl-CoA = N-acetyl-alpha-D-glucosamine 1-phosphate + CoA + H(+). It catalyses the reaction N-acetyl-alpha-D-glucosamine 1-phosphate + UTP + H(+) = UDP-N-acetyl-alpha-D-glucosamine + diphosphate. Its pathway is nucleotide-sugar biosynthesis; UDP-N-acetyl-alpha-D-glucosamine biosynthesis; N-acetyl-alpha-D-glucosamine 1-phosphate from alpha-D-glucosamine 6-phosphate (route II): step 2/2. It functions in the pathway nucleotide-sugar biosynthesis; UDP-N-acetyl-alpha-D-glucosamine biosynthesis; UDP-N-acetyl-alpha-D-glucosamine from N-acetyl-alpha-D-glucosamine 1-phosphate: step 1/1. The protein operates within bacterial outer membrane biogenesis; LPS lipid A biosynthesis. Functionally, catalyzes the last two sequential reactions in the de novo biosynthetic pathway for UDP-N-acetylglucosamine (UDP-GlcNAc). The C-terminal domain catalyzes the transfer of acetyl group from acetyl coenzyme A to glucosamine-1-phosphate (GlcN-1-P) to produce N-acetylglucosamine-1-phosphate (GlcNAc-1-P), which is converted into UDP-GlcNAc by the transfer of uridine 5-monophosphate (from uridine 5-triphosphate), a reaction catalyzed by the N-terminal domain. The sequence is that of Bifunctional protein GlmU from Bacillus cereus (strain AH187).